Here is a 276-residue protein sequence, read N- to C-terminus: Nickel import system permease protein NikC (276 aa).

The next 5 helical transmembrane spans lie at 10-30, 73-93, 108-128, 186-206, and 238-258; these read LIFF…FFVS, LFVT…LGLF, FIDV…ASFF, IIPA…LYIS, and IMLI…NLTG. In terms of domain architecture, ABC transmembrane type-1 spans 69-258; that stretch reads ARSTLFVTVL…ITILIFNLTG (190 aa).

It belongs to the binding-protein-dependent transport system permease family. OppBC subfamily. In terms of assembly, the complex is composed of two ATP-binding proteins (NikD and NikE), two transmembrane proteins (NikB and NikC) and a solute-binding protein (NikA).

It is found in the cell membrane. Its function is as follows. Part of the ABC transporter complex NikABCDE (Opp2) involved in nickel import. Probably responsible for the translocation of the substrate across the membrane. The polypeptide is Nickel import system permease protein NikC (Staphylococcus aureus (strain USA300)).